The following is a 71-amino-acid chain: Small ribosomal subunit protein bS21 (71 aa).

Belongs to the bacterial ribosomal protein bS21 family.

The protein is Small ribosomal subunit protein bS21 of Hahella chejuensis (strain KCTC 2396).